A 292-amino-acid polypeptide reads, in one-letter code: Tetratricopeptide repeat protein 1 (292 aa).

Composition is skewed to basic and acidic residues over residues 1 to 12 and 47 to 64; these read MEEKSEDCKVPE and KAAE…ECFH. The tract at residues 1 to 125 is disordered; it reads MEEKSEDCKV…SAKLKEEGNE (125 aa). Residues 88-98 show a composition bias toward acidic residues; the sequence is SSSELDEEYLI. Position 90 is a phosphoserine (Ser-90). The segment covering 99–125 has biased composition (basic and acidic residues); it reads ELEKNMPEEEKQKRREESAKLKEEGNE. 3 TPR repeats span residues 116–149, 155–188, and 189–222; these read SAKL…CPAC, SVLF…NPTY, and IRAI…DPSV.

As to quaternary structure, interacts with the GAP domain of NF1. Interacts (via TPR repeats) with HSP90AA1 and HSPA8.

This Mus musculus (Mouse) protein is Tetratricopeptide repeat protein 1 (Ttc1).